The chain runs to 273 residues: Type III pantothenate kinase (273 aa).

7 to 14 (DVGNTAIK) is a binding site for ATP. Substrate contacts are provided by residues Phe-119 and 124–127 (GIDR). Asp-126 acts as the Proton acceptor in catalysis. Asp-146 is a binding site for K(+). Position 149 (Thr-149) interacts with ATP. Position 206 (Thr-206) interacts with substrate.

It belongs to the type III pantothenate kinase family. As to quaternary structure, homodimer. NH4(+) is required as a cofactor. K(+) serves as cofactor.

The protein resides in the cytoplasm. The catalysed reaction is (R)-pantothenate + ATP = (R)-4'-phosphopantothenate + ADP + H(+). It functions in the pathway cofactor biosynthesis; coenzyme A biosynthesis; CoA from (R)-pantothenate: step 1/5. Functionally, catalyzes the phosphorylation of pantothenate (Pan), the first step in CoA biosynthesis. This Rhodopirellula baltica (strain DSM 10527 / NCIMB 13988 / SH1) protein is Type III pantothenate kinase.